Consider the following 1342-residue polypeptide: MVYSYTEKKRIRKDFGKRPQVLDIPYLLSIQLDSFQKFIEQDPEGQYGLEAAFRSVFPIQSYSGNSELQYVSYRLGEPVFDVKECQIRGVTYSAPLRVKLRLVIYEREAPEGTVKDIKEQEVYMGEIPLMTDNGTFVINGTERVIVSQLHRSPGVFFDSDKGKTHSSGKVLYNARIIPYRGSWLDFEFDPKDNLFVRIDRRRKLPATIILRALNYTTEQILDLFFEKVVFEIRDNKLQMELVPERLRGETASFDIEANGKVYVEKGRRITARHIRQLEKDDIKHIEVPVEYIAGKVASKDYIDEATGELICPANMELSLDLLAKLSQSGHKRIETLFTNDLDHGPYISETVRVDPTNDRLSALVEIYRMMRPGEPPTREAAESLFENLFFSEDRYDLSAVGRMKFNRSLLRDEIEGSGILSKDDIIEVMKKLIDIRNGKGEVDDIDHLGNRRIRSVGEMAENQFRVGLVRVERAVKERLSLGDLDTLMPQDMINAKPISAAVKEFFGSSQLSQFMDQNNPLSEITHKRRISALGPGGLTRERAGFEVRDVHPTHYGRVCPIETPEGPNIGLINSLSVYAQTNEYGFLETPYRKVTDGVVTDEIHYLSAIEEGNYVIAQANSNLDENGHFVEDLVTCRSKGESSLFSRDQVDYMDVSTQQVVSVGASLIPFLEHDDANRALMGANMQRQAVPTLRADKPLVGTGMERAVAVDSGVTAVAKRGGTVQYVDASRIVIKVNEDEMYPGEAGIDIYNLTKYTRSNQNTCINQMPCVSLGEPIERGDVLADGPSTDLGELALGQNMRVAFMPWNGYNFEDSILVSERVVQEDRFTTIHIQELACVSRDTKLGPEEITADIPNVGEAALSKLDESGIVYIGAEVTGGDILVGKVTPKGETQLTPEEKLLRAIFGEKASDVKDSSLRVPNGVSGTVIDVQVFTRDGVEKDKRALEIEEMQLKQAKKDLSEELQILEAGLFSRIYAVLVAGGVEADKLDKLPRDRWLELGLTDEEKQNQLEQLAEQYDELKHEFEKKLEAKRRKITQGDDLAPGVLKIVKVYLAVKRRIQPGDKMAGRHGNKGVISKINPIEDMPHDANGTPVDIVLNPLGVPSRMNIGQILETHLGMAAKGIGDKINAMLKQQQEVAKLREFIQRAYDLGADVRQKVDLNTFSDEEVLRLAENLRKGMPIATPVFDGAKEAEIKELLQLGDLPTSGQITLFDGRTGEQFERPVTVGYMYMLKLNHLVDDKMHARSTGSYSLVTQQPLGGKAQFGGQRFGEMEVWALEAYGAAYTLQEMLTVKSDDVNGRTKMYKNIVDGNHQMEPGMPESFNVLLKEIRSLGINIELEDE.

This sequence belongs to the RNA polymerase beta chain family. In terms of assembly, the RNAP catalytic core consists of 2 alpha, 1 beta, 1 beta' and 1 omega subunit. When a sigma factor is associated with the core the holoenzyme is formed, which can initiate transcription.

The catalysed reaction is RNA(n) + a ribonucleoside 5'-triphosphate = RNA(n+1) + diphosphate. In terms of biological role, DNA-dependent RNA polymerase catalyzes the transcription of DNA into RNA using the four ribonucleoside triphosphates as substrates. This is DNA-directed RNA polymerase subunit beta from Klebsiella pneumoniae (strain 342).